The chain runs to 804 residues: Protein SEY1 homolog 1 (804 aa).

The Cytoplasmic segment spans residues 1-638 (MEQIITGEGQ…SVLASQNNEH (638 aa)). Residues 28–245 (GTDYHMVSII…EENYLFKEKS (218 aa)) form the GB1/RHD3-type G domain. Residue 38-45 (GCQSSGKS) coordinates GTP. Residues 639–659 (IPPWAWFLFLFSCSDYILWWL) form a helical membrane-spanning segment. The Lumenal segment spans residues 660–662 (SNP). A helical membrane pass occupies residues 663-683 (LLFSLTVLFGGTYLVLNQLGL). Residues 684 to 804 (WDTAVQKLLD…RKRVRVGTLV (121 aa)) are Cytoplasmic-facing. Residues 706–804 (PDENNETETN…RKRVRVGTLV (99 aa)) are disordered. Residues 751-791 (QGLTKTESNVTFANVSNANDEQSLTKNNTEDSLNTGSSSSG) are compositionally biased toward polar residues. A compositionally biased stretch (basic residues) spans 792–804 (QRHRKRVRVGTLV).

Belongs to the TRAFAC class dynamin-like GTPase superfamily. GB1/RHD3 GTPase family. RHD3 subfamily.

Its subcellular location is the endoplasmic reticulum membrane. Probable GTP-binding protein that may be involved in cell development. This is Protein SEY1 homolog 1 from Trichomonas vaginalis (strain ATCC PRA-98 / G3).